The following is a 241-amino-acid chain: Small ribosomal subunit protein eS4 (241 aa).

An S4 RNA-binding domain is found at 37-100 (LPIVVWARDQ…GKHYRILRDK (64 aa)).

This sequence belongs to the eukaryotic ribosomal protein eS4 family.

In Methanospirillum hungatei JF-1 (strain ATCC 27890 / DSM 864 / NBRC 100397 / JF-1), this protein is Small ribosomal subunit protein eS4.